The primary structure comprises 394 residues: Probable glycosyltransferase FCK3 (394 aa).

The protein belongs to the afumC glycosyltransferase family.

Its pathway is secondary metabolite biosynthesis. Functionally, probable glycosyl transferase; part of the gene cluster that mediates the biosynthesis of cytokinins such as fusatin, fusatinic acids or 8-oxofusatin, known for their growth promoting and anti-senescence activities toward host plants. FCK1 is a bifunctional enzyme that performs the first steps in the biosynthesis of Fusarium cytokinins. It first condenses adenosine monophosphate (AMP) with dimethylallyl diphosphate (DMAPP) to yield isoprenyl adenosine monophosphate. It then catalyzes the removal of the phosphoribose to produce isopentenylaldehyde. The cytochrome P450 monooxygenase then converts isopentenylaldehyde to trans-zeatin. A condensation step converts trans-zeatin to fusatin which is further modified to produce fusatinic acid. The mechanism for oxidation of fusatin to fusatinic acid remains unknown. 8-oxofusatin could be produced through several pathways, via direct oxygenation of fusatin, or via the 8-oxo-pentenyladenine intermediate which itself must arise from either the prenylation of 8-oxo-AMP by FCK1 and/or oxygenation of isopentenylaldehyde. Both the FCK3 and FCK4 enzymes act downstream of the identified cytokinins to produce yet unidentified compounds. The polypeptide is Probable glycosyltransferase FCK3 (Fusarium pseudograminearum (strain CS3096) (Wheat and barley crown-rot fungus)).